Here is a 398-residue protein sequence, read N- to C-terminus: MSKTIAINAGSSSLKWQLYQMPEEEVLAQGIIERIGLKDSISTVKYDGKKEEQILDIHDHTEAVKILLNDLIHFGIIAAYGEITGVGHRVVAGGELFKESVVVNDKVLEQIEELSVLAPLHNPGAAAGIRAFRDILPDITSVCVFDTSFHTSMAKHTYLYPIPQKYYTDYKVRKYGAHGTSHKYVAQEAAKMLGRPLEELKLITAHIGNGVSITANYHGKSVDTSMGFTPLAGPMMGTRSGDIDPAIIPYLIEQDPELKDAADVVNMLNKKSGLSGVSGISSDMRDIEAGLQEDNPDAVLAYNIFIDRIKKCIGQYFAVLNGADALVFTAGMGENAPLMRQDVIGGLSWFGMDIDPEKNVFGYRGDISTPESKVKVLVISTDEELCIARDVERLKNTK.

Mg(2+) is bound at residue Asn-8. Lys-15 lines the ATP pocket. Arg-89 is a binding site for substrate. The active-site Proton donor/acceptor is Asp-146. ATP contacts are provided by residues 206 to 210 (HIGNG), 283 to 285 (DMR), and 331 to 335 (GMGEN). Residue Glu-383 coordinates Mg(2+).

It belongs to the acetokinase family. As to quaternary structure, homodimer. Mg(2+) is required as a cofactor. Requires Mn(2+) as cofactor.

The protein localises to the cytoplasm. It carries out the reaction acetate + ATP = acetyl phosphate + ADP. Its pathway is metabolic intermediate biosynthesis; acetyl-CoA biosynthesis; acetyl-CoA from acetate: step 1/2. In terms of biological role, catalyzes the formation of acetyl phosphate from acetate and ATP. Can also catalyze the reverse reaction. This Streptococcus pyogenes serotype M49 (strain NZ131) protein is Acetate kinase.